The sequence spans 407 residues: Imidazolonepropionase (407 aa).

The Fe(3+) site is built by His74 and His76. His74 and His76 together coordinate Zn(2+). The 4-imidazolone-5-propanoate site is built by Arg83, Tyr146, and His179. Residue Tyr146 participates in N-formimidoyl-L-glutamate binding. A Fe(3+)-binding site is contributed by His244. Residue His244 coordinates Zn(2+). Gln247 provides a ligand contact to 4-imidazolone-5-propanoate. Position 319 (Asp319) interacts with Fe(3+). A Zn(2+)-binding site is contributed by Asp319. N-formimidoyl-L-glutamate contacts are provided by Asn321 and Gly323. Thr324 is a 4-imidazolone-5-propanoate binding site.

It belongs to the metallo-dependent hydrolases superfamily. HutI family. Requires Zn(2+) as cofactor. It depends on Fe(3+) as a cofactor.

The protein resides in the cytoplasm. The enzyme catalyses 4-imidazolone-5-propanoate + H2O = N-formimidoyl-L-glutamate. It participates in amino-acid degradation; L-histidine degradation into L-glutamate; N-formimidoyl-L-glutamate from L-histidine: step 3/3. In terms of biological role, catalyzes the hydrolytic cleavage of the carbon-nitrogen bond in imidazolone-5-propanoate to yield N-formimidoyl-L-glutamate. It is the third step in the universal histidine degradation pathway. The chain is Imidazolonepropionase from Salmonella heidelberg (strain SL476).